The sequence spans 147 residues: Globin, major polymeric component P1 (147 aa).

In terms of domain architecture, Globin spans 2–146 (HLTADQVAAL…ISDACIAGLQ (145 aa)). Histidine 96 serves as a coordination point for heme b.

This sequence belongs to the globin family. As to quaternary structure, polymer.

The polypeptide is Globin, major polymeric component P1 (Glycera dibranchiata (Bloodworm)).